The sequence spans 1116 residues: ELKS/Rab6-interacting/CAST family member 1 (1116 aa).

Residues 1-54 form a disordered region; the sequence is MYGSARSVGKVEPSSQSPGRSPRLPRSPRLGHRRTNSTGGSSGSSVGGGSGKTL. Lysine 10 carries the N6-acetyllysine modification. A compositionally biased stretch (low complexity) spans 13-28; that stretch reads PSSQSPGRSPRLPRSP. Phosphoserine is present on residues serine 17, serine 21, and serine 37. At threonine 38 the chain carries Phosphothreonine. Residues 40-51 show a composition bias toward gly residues; the sequence is GSSGSSVGGGSG. 3 positions are modified to phosphoserine: serine 55, serine 75, and serine 94. Residues 144–988 adopt a coiled-coil conformation; that stretch reads RQARDNTIMD…RMKLMADNYE (845 aa). Over residues 590–602 the composition is skewed to basic and acidic residues; that stretch reads KEKQMSSLKERVK. Disordered stretches follow at residues 590-609 and 814-836; these read KEKQ…ADTT and ARRR…RKKD. Phosphoserine is present on serine 1005. Threonine 1046 bears the Phosphothreonine mark. The 63-residue stretch at 1046–1108 folds into the FIP-RBD domain; it reads TPPASYNLDD…DHCPDILEQV (63 aa). A coiled-coil region spans residues 1060 to 1100; it reads WENELQKMTRGQLQDELEKGERDNAELQEFANAILQQIADH.

As to quaternary structure, part of a complex with CHUK, IKBKB and IKBKG. Interacts with CHUK, IKBKB and IKBKG. The interaction with IKBKG is independent of CHUK and IKBKB. Interacts with NFKBIA. Isoform 4 interacts with PPFIA1, and through its C-terminus with the PDZ domains of RIMS1 and RIMS2. Interacts with ERC2/CAST1. Interacts with the GTB-bound forms of RAB6A isoform 1 and isoform 2 and with RAB6B. The interaction was strongest with RAB6B, followed by RAB6A isoform 2 and weakest with RAB6A isoform 1. Interacts with SDCCAG8. Part of a cortical microtubule stabilization complex (CMSC) composed of KANK1, PPFIA1, PPFIBP1, ERC1/ELKS, PHLDB2/LL5beta, CLASPs, KIF21A and possibly additional interactors; within CMSCs KANK1 and PHLDB2/LL5beta appear to be the core components for targeting of microtubule-binding proteins KIF21A and CLASPs, whereas PPFIA1, PPFIBP1 and ERC1/ELKS serve as scaffolds for protein clustering. Widely expressed. Isoform 2 and isoform 4 are abundantly expressed in brain. Isoform 1 and isoform 3 are predominantly expressed in testis and thyroid, and isoform 1 predominates in other tissues tested.

It is found in the cytoplasm. The protein localises to the cytoskeleton. It localises to the microtubule organizing center. The protein resides in the centrosome. Its subcellular location is the membrane. It is found in the golgi apparatus membrane. The protein localises to the presynaptic cell membrane. It localises to the cell projection. The protein resides in the podosome. In terms of biological role, regulatory subunit of the IKK complex. Probably recruits IkappaBalpha/NFKBIA to the complex. May be involved in the organization of the cytomatrix at the nerve terminals active zone (CAZ) which regulates neurotransmitter release. May be involved in vesicle trafficking at the CAZ. May be involved in Rab-6 regulated endosomes to Golgi transport. This Homo sapiens (Human) protein is ELKS/Rab6-interacting/CAST family member 1 (ERC1).